The following is a 437-amino-acid chain: Serine carboxypeptidase-like 17 (437 aa).

The N-terminal stretch at 1 to 26 is a signal peptide; the sequence is MGKECYYLSWILKFHLLLVLIQLVDS. Cystine bridges form between Cys-85-Cys-327, Cys-249-Cys-263, and Cys-287-Cys-293. A glycan (N-linked (GlcNAc...) asparagine) is linked at Asn-106. The active site involves Ser-181. The active site involves Asp-362. N-linked (GlcNAc...) asparagine glycosylation occurs at Asn-378. Residue His-415 is part of the active site.

Belongs to the peptidase S10 family. As to expression, expressed in seedlings and siliques.

It localises to the secreted. Probable carboxypeptidase. The sequence is that of Serine carboxypeptidase-like 17 (SCPL17) from Arabidopsis thaliana (Mouse-ear cress).